Consider the following 147-residue polypeptide: uncharacterized protein (147 aa).

It to M.jannaschii MJ0215.

This is an uncharacterized protein from Methanocaldococcus jannaschii (strain ATCC 43067 / DSM 2661 / JAL-1 / JCM 10045 / NBRC 100440) (Methanococcus jannaschii).